A 127-amino-acid polypeptide reads, in one-letter code: UPF0102 protein Geob_1494 (127 aa).

Belongs to the UPF0102 family.

This is UPF0102 protein Geob_1494 from Geotalea daltonii (strain DSM 22248 / JCM 15807 / FRC-32) (Geobacter daltonii).